The sequence spans 392 residues: ADP-ribosylhydrolase ARH1 (392 aa).

Residues serine 79, aspartate 80, and aspartate 81 each coordinate Mg(2+). Residue lysine 109 participates in substrate binding. Residues 125-127 (IQT) are substrate. Glycine 159 provides a ligand contact to substrate. Substrate stretches follow at residues 192 to 194 (HNN), 309 to 311 (FSG), and 315 to 316 (SS). Mg(2+)-binding residues include aspartate 348, aspartate 350, and serine 351.

Belongs to the ADP-ribosylglycohydrolase family. In terms of assembly, monomer. Mg(2+) serves as cofactor.

The catalysed reaction is N(omega)-(ADP-D-ribosyl)-L-arginyl-[protein] + H2O = ADP-D-ribose + L-arginyl-[protein]. In terms of biological role, specifically acts as an arginine mono-ADP-ribosylhydrolase by mediating the removal of mono-ADP-ribose attached to arginine residues on proteins. The protein is ADP-ribosylhydrolase ARH1 (adprh) of Dictyostelium discoideum (Social amoeba).